A 502-amino-acid polypeptide reads, in one-letter code: ATP synthase subunit alpha (502 aa).

The disordered stretch occupies residues 115-137 (VDGLGPVETTETRPIESPAPGVM). Residue 169-176 (GDRQTGKT) participates in ATP binding.

Belongs to the ATPase alpha/beta chains family. In terms of assembly, F-type ATPases have 2 components, CF(1) - the catalytic core - and CF(0) - the membrane proton channel. CF(1) has five subunits: alpha(3), beta(3), gamma(1), delta(1), epsilon(1). CF(0) has three main subunits: a(1), b(2) and c(9-12). The alpha and beta chains form an alternating ring which encloses part of the gamma chain. CF(1) is attached to CF(0) by a central stalk formed by the gamma and epsilon chains, while a peripheral stalk is formed by the delta and b chains.

Its subcellular location is the cell membrane. The enzyme catalyses ATP + H2O + 4 H(+)(in) = ADP + phosphate + 5 H(+)(out). Its function is as follows. Produces ATP from ADP in the presence of a proton gradient across the membrane. The alpha chain is a regulatory subunit. This chain is ATP synthase subunit alpha, found in Geobacillus stearothermophilus (Bacillus stearothermophilus).